Reading from the N-terminus, the 619-residue chain is Type VI secretion system component TssF1 (619 aa).

As to quaternary structure, interacts with TssA1.

In terms of biological role, core component of the H1 type VI (H1-T6SS) secretion system that plays a role in the release of toxins targeting both eukaryotic and prokaryotic species. The chain is Type VI secretion system component TssF1 from Pseudomonas aeruginosa (strain ATCC 15692 / DSM 22644 / CIP 104116 / JCM 14847 / LMG 12228 / 1C / PRS 101 / PAO1).